The primary structure comprises 94 residues: Venom protein 59.1 (94 aa).

The N-terminal stretch at 1–22 (MNSREMFCVFILFASFFYCSYA) is a signal peptide. Intrachain disulfides connect cysteine 19–cysteine 47, cysteine 26–cysteine 49, cysteine 32–cysteine 50, cysteine 38–cysteine 53, cysteine 61–cysteine 76, and cysteine 70–cysteine 91. Residues 23–94 (EQECNCDKSC…GEALEICLRA (72 aa)) form the IGFBP N-terminal domain.

In terms of tissue distribution, expressed by the venom gland.

It localises to the secreted. The protein is Venom protein 59.1 of Lychas mucronatus (Chinese swimming scorpion).